A 397-amino-acid chain; its full sequence is Acetate kinase (397 aa).

Asn-8 is a Mg(2+) binding site. Lys-15 contacts ATP. Arg-89 provides a ligand contact to substrate. The Proton donor/acceptor role is filled by Asp-146. ATP-binding positions include 206–210 (HVGNG), 283–285 (DMR), and 331–335 (GIGEN). Glu-383 contributes to the Mg(2+) binding site.

Belongs to the acetokinase family. In terms of assembly, homodimer. Requires Mg(2+) as cofactor. It depends on Mn(2+) as a cofactor.

It is found in the cytoplasm. The catalysed reaction is acetate + ATP = acetyl phosphate + ADP. Its pathway is metabolic intermediate biosynthesis; acetyl-CoA biosynthesis; acetyl-CoA from acetate: step 1/2. In terms of biological role, catalyzes the formation of acetyl phosphate from acetate and ATP. Can also catalyze the reverse reaction. The sequence is that of Acetate kinase from Streptococcus thermophilus (strain ATCC BAA-491 / LMD-9).